The sequence spans 143 residues: Nucleoside diphosphate kinase (143 aa).

ATP contacts are provided by Lys-11, Phe-59, Arg-87, Thr-93, Arg-104, and Asn-114. His-117 serves as the catalytic Pros-phosphohistidine intermediate.

It belongs to the NDK family. Homotetramer. It depends on Mg(2+) as a cofactor.

It is found in the cytoplasm. The catalysed reaction is a 2'-deoxyribonucleoside 5'-diphosphate + ATP = a 2'-deoxyribonucleoside 5'-triphosphate + ADP. It carries out the reaction a ribonucleoside 5'-diphosphate + ATP = a ribonucleoside 5'-triphosphate + ADP. In terms of biological role, major role in the synthesis of nucleoside triphosphates other than ATP. The ATP gamma phosphate is transferred to the NDP beta phosphate via a ping-pong mechanism, using a phosphorylated active-site intermediate. The chain is Nucleoside diphosphate kinase from Sodalis glossinidius (strain morsitans).